Here is a 673-residue protein sequence, read N- to C-terminus: MESATISPQPPQSDSLEAFPQKSMEPADIAVLVLYFLFVLAVGLWSTVRTKRDTVKGYFLAGGDMVWWPVGASLFASNVGSGHFIGLAGSGAAVGISVAAYELNGLFSVLMLAWVFLPIYIAGQVTTMPEYLRRRFGGNRISITLAVLYLFIYIFTKISVDMYAGAIFIQQSLHLDLYLAIVGLLAITALYTVAGGLAAVIYTDALQTVIMLIGAFILMGYSFAAVGGMEGLKDQYFLALASNRSENSSCGLPREDAFHIFRDPLTSDLPWPGILFGMSIPSLWYWCTDQVIVQRSLAAKNLSHAKGGSLMAAYLKVLPLFLMVFPGMVSRVLFPDQVACAHPDICQRVCSNPSGCSDIAYPKLVLELLPTGLRGLMMAVMVAALMSSLTSIFNSASTIFTMDLWNHIRPRASERELMIVGRIFVFALVLVSILWIPIVQASQGGQLFIYIQSISSYLQPPVAMVFIMGCFWKRTNEKGAFSGLILGLLLGLVRLILDFVYAQPRCDQPDDRPAVVKDVHYLYFSMILSFTTLITVVTVSWFTETPSKEMVSRLTWFTRHEPVAQKDSAPPETPLSLTLSQNGTTEAPGTSIQLETVQESTTKACGDGVSPRHSKVVRAILWLCGMEKNKEEPPSKAEPVIVSLEENPLVKTLLDVNCIVCISCAIFLWGYFA.

At 1 to 27 (MESATISPQPPQSDSLEAFPQKSMEPA) the chain is on the extracellular side. Residues 28 to 48 (DIAVLVLYFLFVLAVGLWSTV) form a helical membrane-spanning segment. The Cytoplasmic segment spans residues 49–65 (RTKRDTVKGYFLAGGDM). Residues 66 to 88 (VWWPVGASLFASNVGSGHFIGLA) form a helical membrane-spanning segment. The Extracellular segment spans residues 89–102 (GSGAAVGISVAAYE). Residues 103-123 (LNGLFSVLMLAWVFLPIYIAG) traverse the membrane as a helical segment. At 124-148 (QVTTMPEYLRRRFGGNRISITLAVL) the chain is on the cytoplasmic side. Residues 149-169 (YLFIYIFTKISVDMYAGAIFI) form a helical membrane-spanning segment. Residues 170-180 (QQSLHLDLYLA) are Extracellular-facing. A helical membrane pass occupies residues 181 to 201 (IVGLLAITALYTVAGGLAAVI). The Cytoplasmic segment spans residues 202–208 (YTDALQT). Residues 209–229 (VIMLIGAFILMGYSFAAVGGM) form a helical membrane-spanning segment. The Extracellular segment spans residues 230–272 (EGLKDQYFLALASNRSENSSCGLPREDAFHIFRDPLTSDLPWP). A helical membrane pass occupies residues 273 to 293 (GILFGMSIPSLWYWCTDQVIV). Residues 294 to 308 (QRSLAAKNLSHAKGG) are Cytoplasmic-facing. A helical transmembrane segment spans residues 309–329 (SLMAAYLKVLPLFLMVFPGMV). Residues 330–375 (SRVLFPDQVACAHPDICQRVCSNPSGCSDIAYPKLVLELLPTGLRG) are Extracellular-facing. Residues 376–396 (LMMAVMVAALMSSLTSIFNSA) traverse the membrane as a helical segment. Over 397 to 418 (STIFTMDLWNHIRPRASERELM) the chain is Cytoplasmic. The helical transmembrane segment at 419 to 439 (IVGRIFVFALVLVSILWIPIV) threads the bilayer. Residues 440–446 (QASQGGQ) lie on the Extracellular side of the membrane. Residues 447 to 467 (LFIYIQSISSYLQPPVAMVFI) form a helical membrane-spanning segment. Residues 468-479 (MGCFWKRTNEKG) lie on the Cytoplasmic side of the membrane. Residues 480-500 (AFSGLILGLLLGLVRLILDFV) form a helical membrane-spanning segment. Residues 501–521 (YAQPRCDQPDDRPAVVKDVHY) are Extracellular-facing. Residues 522 to 542 (LYFSMILSFTTLITVVTVSWF) form a helical membrane-spanning segment. Topologically, residues 543 to 652 (TETPSKEMVS…SLEENPLVKT (110 aa)) are cytoplasmic. The helical transmembrane segment at 653 to 673 (LLDVNCIVCISCAIFLWGYFA) threads the bilayer.

This sequence belongs to the sodium:solute symporter (SSF) (TC 2.A.21) family.

It is found in the membrane. The protein localises to the apical cell membrane. It carries out the reaction myo-inositol(out) + 2 Na(+)(out) = myo-inositol(in) + 2 Na(+)(in). The enzyme catalyses 1D-chiro-inositol(out) + 2 Na(+)(out) = 1D-chiro-inositol(in) + 2 Na(+)(in). It catalyses the reaction D-glucose(out) + 2 Na(+)(out) = D-glucose(in) + 2 Na(+)(in). The catalysed reaction is D-xylose(out) + 2 Na(+)(out) = D-xylose(in) + 2 Na(+)(in). With respect to regulation, MI transport activity inhibited by D-chiro-inositol (DCI), phlorizin (Pz) and sodium (Na(+)). Insulin increases D-chiro-inositol uptake. Its function is as follows. Involved in the sodium-dependent cotransport of myo-inositol (MI) with a Na(+):MI stoichiometry of 2:1. Exclusively responsible for apical MI transport and absorption in intestine. Can also transport D-chiro-inositol (DCI) but not L-fucose. Exhibits stereospecific cotransport of both D-glucose and D-xylose. May induce apoptosis through the TNF-alpha, PDCD1 pathway. May play a role in the regulation of MI concentration in serum, involving reabsorption in at least the proximal tubule of the kidney. In Mus musculus (Mouse), this protein is Sodium/myo-inositol cotransporter 2.